Consider the following 1243-residue polypeptide: Probable phospholipid-transporting ATPase 7 (1243 aa).

The Cytoplasmic portion of the chain corresponds to 1-74; sequence MGRRRIRSRI…TTRYNLITFL (74 aa). Residues 75 to 96 traverse the membrane as a helical segment; that stretch reads PKCLYEQFHRVANFYFLVAAIL. Over 97 to 100 the chain is Extracellular; that stretch reads SVFP. The helical transmembrane segment at 101–123 threads the bilayer; that stretch reads LSPFNKWSMIAPLIFVVGLSMGK. Topologically, residues 124 to 305 are cytoplasmic; that stretch reads EALEDWRRFM…SRIEKRMDYI (182 aa). The chain crosses the membrane as a helical span at residues 306-327; it reads IYTLFALLVLVSFISSLGFAVM. Over 328 to 359 the chain is Extracellular; the sequence is TKMHMGDWWYLRPDKPERLTNPRNPFHAWVVH. Residues 360–377 traverse the membrane as a helical segment; that stretch reads LITAVLLYGYLIPISLYV. The Cytoplasmic segment spans residues 378–941; it reads SIELVKVLQA…HGHWCYKRIA (564 aa). The 4-aspartylphosphate intermediate role is filled by aspartate 425. Residue lysine 623 forms a Glycyl lysine isopeptide (Lys-Gly) (interchain with G-Cter in ubiquitin) linkage. 2 residues coordinate Mg(2+): aspartate 886 and aspartate 890. A helical transmembrane segment spans residues 942-961; that stretch reads QMICYFFYKNITFGLTLFYF. Over 962–975 the chain is Extracellular; the sequence is EAFTGFSGQAIYND. The chain crosses the membrane as a helical span at residues 976 to 995; sequence SYLLLFNVILTSLPVIALGV. The Cytoplasmic portion of the chain corresponds to 996-1025; sequence FEQDVSSEVCLQFPALYQQGPKNLFFDWYR. A helical transmembrane segment spans residues 1026-1048; that stretch reads IIGWMANGVYASVVIFSLNIGIF. At 1049-1061 the chain is on the extracellular side; it reads HVQSFCSGGQTAD. The helical transmembrane segment at 1062–1084 threads the bilayer; the sequence is MDAMGTAMFTCIIWAVNVQIALT. The Cytoplasmic portion of the chain corresponds to 1085 to 1090; the sequence is MSHFTW. Residues 1091 to 1111 form a helical membrane-spanning segment; the sequence is IQHVLIWGSIVTWYIFLALFG. Residues 1112–1128 are Extracellular-facing; that stretch reads MLPPKVSGNIFHMLSET. Residues 1129 to 1153 traverse the membrane as a helical segment; it reads LAPAPIFWLTSLLVIAATTLPYLAY. Over 1154 to 1243 the chain is Cytoplasmic; it reads ISFQRSLNPL…TDTTSTTQHS (90 aa).

Belongs to the cation transport ATPase (P-type) (TC 3.A.3) family. Type IV subfamily.

It localises to the cell membrane. It is found in the endomembrane system. It catalyses the reaction ATP + H2O + phospholipidSide 1 = ADP + phosphate + phospholipidSide 2.. Involved in transport of phospholipids and in regulation of pollen plasma membrane lipid asymmetry. The polypeptide is Probable phospholipid-transporting ATPase 7 (Arabidopsis thaliana (Mouse-ear cress)).